The primary structure comprises 327 residues: GMP reductase (327 aa).

The active-site Thioimidate intermediate is C176. 205–228 (IIADGGIRTHGDIAKSIRFGASMV) serves as a coordination point for NADP(+).

This sequence belongs to the IMPDH/GMPR family. GuaC type 2 subfamily.

The enzyme catalyses IMP + NH4(+) + NADP(+) = GMP + NADPH + 2 H(+). Functionally, catalyzes the irreversible NADPH-dependent deamination of GMP to IMP. It functions in the conversion of nucleobase, nucleoside and nucleotide derivatives of G to A nucleotides, and in maintaining the intracellular balance of A and G nucleotides. In Streptococcus pyogenes serotype M5 (strain Manfredo), this protein is GMP reductase.